We begin with the raw amino-acid sequence, 134 residues long: Bet1-like protein At1g29060 (134 aa).

Gly residues predominate over residues 1–12 (MASNRGAGGSLY). A disordered region spans residues 1–31 (MASNRGAGGSLYGGADPYRSREGLSTRNASG). At 1–110 (MASNRGAGGS…LSIIRSGNNH (110 aa)) the chain is on the cytoplasmic side. One can recognise a t-SNARE coiled-coil homology domain in the interval 40–102 (DPMHSDLDDE…KNNIRKLNLS (63 aa)). Residues 111–131 (IMHVVLFALLLFFILYMWSKM) form a helical; Anchor for type IV membrane protein membrane-spanning segment. Over 132-134 (FKR) the chain is Vesicular.

The protein belongs to the BET1 family.

It localises to the golgi apparatus membrane. It is found in the endoplasmic reticulum membrane. In terms of biological role, required for vesicular transport from the ER to the Golgi complex. Functions as a SNARE associated with ER-derived vesicles. The chain is Bet1-like protein At1g29060 from Arabidopsis thaliana (Mouse-ear cress).